The following is a 232-amino-acid chain: Mitochondrial import inner membrane translocase subunit Tim21 (232 aa).

Residues 1-31 constitute a mitochondrion transit peptide; sequence MLPRFLWRPVLCSYRALGSPSRSLTVSYRNL. The chain crosses the membrane as a helical span at residues 96 to 116; sequence FTYFIVVLIGIGVTGGLFYVV.

The protein belongs to the TIM21 family.

The protein resides in the mitochondrion membrane. May participate in the translocation of transit peptide-containing proteins across the mitochondrial inner membrane. The protein is Mitochondrial import inner membrane translocase subunit Tim21 (timm21) of Xenopus laevis (African clawed frog).